A 166-amino-acid chain; its full sequence is Small ribosomal subunit protein uS5 (166 aa).

Residues 11–74 (LDDNVVAINR…EAAKKNLITV (64 aa)) enclose the S5 DRBM domain.

This sequence belongs to the universal ribosomal protein uS5 family. As to quaternary structure, part of the 30S ribosomal subunit. Contacts proteins S4 and S8.

With S4 and S12 plays an important role in translational accuracy. Functionally, located at the back of the 30S subunit body where it stabilizes the conformation of the head with respect to the body. In Lactiplantibacillus plantarum (strain ATCC BAA-793 / NCIMB 8826 / WCFS1) (Lactobacillus plantarum), this protein is Small ribosomal subunit protein uS5.